The chain runs to 116 residues: Endocuticle structural glycoprotein SgAbd-4 (116 aa).

Gln-1 is subject to Pyrrolidone carboxylic acid. Residues Asp-20 to Pro-92 enclose the Chitin-binding type R&amp;R domain. Thr-90 and Thr-107 each carry an O-linked (HexNAc...) threonine glycan. An O-linked (HexNAc...) serine glycan is attached at Ser-110. A glycan (O-linked (HexNAc...) threonine) is linked at Thr-111. Pro-116 is subject to Proline amide.

Its function is as follows. Component of the abdominal endocuticle. The sequence is that of Endocuticle structural glycoprotein SgAbd-4 from Schistocerca gregaria (Desert locust).